The following is a 142-amino-acid chain: Malate dehydrogenase, mitochondrial (142 aa).

NAD(+) contacts are provided by residues 1–6 (ASGGIG) and Asp-26. Residues Arg-73 and Arg-79 each contribute to the substrate site. Residues Asn-86 and 109 to 111 (ITN) each bind NAD(+). Asn-111 is a substrate binding site.

This sequence belongs to the LDH/MDH superfamily. MDH type 1 family. As to quaternary structure, homodimer.

The protein localises to the mitochondrion matrix. The enzyme catalyses (S)-malate + NAD(+) = oxaloacetate + NADH + H(+). This chain is Malate dehydrogenase, mitochondrial, found in Schistosoma mansoni (Blood fluke).